The chain runs to 699 residues: Elongation factor G 1 (699 aa).

The tr-type G domain occupies 8–290 (ERYRNIGICA…AVIEYLPSPI (283 aa)). Residues 17–24 (AHVDAGKT), 88–92 (DTPGH), and 142–145 (NKMD) each bind GTP.

Belongs to the TRAFAC class translation factor GTPase superfamily. Classic translation factor GTPase family. EF-G/EF-2 subfamily.

It is found in the cytoplasm. In terms of biological role, catalyzes the GTP-dependent ribosomal translocation step during translation elongation. During this step, the ribosome changes from the pre-translocational (PRE) to the post-translocational (POST) state as the newly formed A-site-bound peptidyl-tRNA and P-site-bound deacylated tRNA move to the P and E sites, respectively. Catalyzes the coordinated movement of the two tRNA molecules, the mRNA and conformational changes in the ribosome. The sequence is that of Elongation factor G 1 from Vibrio vulnificus (strain YJ016).